A 241-amino-acid polypeptide reads, in one-letter code: MPINRPNLNLNIPPLNIVAAYDGAEIPSTNKHLKNNFNSLHNQMRKMPVSHFKEALDVPDYSGMRQSGFFAMSQGFQLNNHGYDVFIHARRESPQSQGKFAGDKFHISVLRDMVPQAFQALSGLLFSEDSPVDKWKVTDMEKVVQQARVSLGAQFTLYIKPDQENSQYSASFLHKTRQFIECLESRLSENGVISGQCPESDVHPENWKYLSYRNELRSGRDGGEMQRQALREEPFYRLMTE.

The active-site Proton donor is H106. Residue K136 is the Proton acceptor of the active site.

It belongs to the phosphothreonine lyase family.

It is found in the secreted. Its function is as follows. Secreted effector that irreversibly inactivates host MAP kinases by catalyzing the dephosphorylation of the phosphothreonine residue in the pT-X-pY motif present in MAPKs, via a beta-elimination reaction leading to a dehydrobutyrine residue. The protein is MAPK phosphothreonine lyase (spvC) of Salmonella enteritidis.